A 267-amino-acid chain; its full sequence is tRNA pseudouridine synthase A (267 aa).

Catalysis depends on aspartate 51, which acts as the Nucleophile. Position 109 (tyrosine 109) interacts with substrate.

This sequence belongs to the tRNA pseudouridine synthase TruA family.

The catalysed reaction is uridine(38/39/40) in tRNA = pseudouridine(38/39/40) in tRNA. Functionally, formation of pseudouridine at positions 38, 39 and 40 in the anticodon stem and loop of transfer RNAs. The chain is tRNA pseudouridine synthase A from Methanothrix thermoacetophila (strain DSM 6194 / JCM 14653 / NBRC 101360 / PT) (Methanosaeta thermophila).